The chain runs to 672 residues: Penicillin-binding protein activator LpoA (672 aa).

A signal peptide spans 1–26 (MLPFHLVRTQAGRVIPVLLAALFLAG). Cys27 carries the N-palmitoyl cysteine lipid modification. A lipid anchor (S-diacylglycerol cysteine) is attached at Cys27. A disordered region spans residues 298-336 (APPTDTAQAGQVTPSSDGQNAQSPAPYSDQAVASTTPAP). The span at 305–322 (QAGQVTPSSDGQNAQSPA) shows a compositional bias: polar residues. A compositionally biased stretch (low complexity) spans 327 to 336 (QAVASTTPAP).

The protein belongs to the LpoA family. As to quaternary structure, interacts with PBP1a.

The protein localises to the cell outer membrane. Its function is as follows. Regulator of peptidoglycan synthesis that is essential for the function of penicillin-binding protein 1A (PBP1a). This Pectobacterium parmentieri (strain WPP163) (Pectobacterium wasabiae (strain WPP163)) protein is Penicillin-binding protein activator LpoA.